The following is a 396-amino-acid chain: MAKAKFQRTKPHVNIGTIGHVDHGKTTLTAAITKVLHDKYPELNESRAFDQIDNAPEERQRGITINISHVEYQTEKRHYAHVDAPGHADYIKNMITGAAQMDGAILVVAATDGPMPQTREHVLLARQVGVPYILVALNKSDAVDDEELLELVEMEVRELLAAQEFDEDAPVVRVSALKALEGDPKWVESVEQLMDAVDESIPDPVRETDRPFLMPVEDVFTITGRGTVVTGRVERGIINVNEEVEIVGIRPTSTKTTVTGVEMFRKLLDQGQAGDNVGLLLRGIKREDVERGQVVVKPGTTTPHTEFEGQVYILSKDEGGRHTPFFNNYRPQFYFRTTDVTGVVTLPEGTEMVMPGDNTNISVKLIQPVAMDDGLRFAIREGGRTVGAGRVVKIIK.

Positions 10–205 (KPHVNIGTIG…AVDESIPDPV (196 aa)) constitute a tr-type G domain. A G1 region spans residues 19–26 (GHVDHGKT). 19–26 (GHVDHGKT) is a GTP binding site. Threonine 26 is a Mg(2+) binding site. Residues 62 to 66 (GITIN) form a G2 region. The tract at residues 83 to 86 (DAPG) is G3. GTP is bound by residues 83 to 87 (DAPGH) and 138 to 141 (NKSD). The segment at 138 to 141 (NKSD) is G4. The tract at residues 175-177 (SAL) is G5.

The protein belongs to the TRAFAC class translation factor GTPase superfamily. Classic translation factor GTPase family. EF-Tu/EF-1A subfamily. Monomer.

The protein localises to the cytoplasm. It carries out the reaction GTP + H2O = GDP + phosphate + H(+). Functionally, GTP hydrolase that promotes the GTP-dependent binding of aminoacyl-tRNA to the A-site of ribosomes during protein biosynthesis. This is Elongation factor Tu from Mycobacterium marinum (strain ATCC BAA-535 / M).